The following is a 58-amino-acid chain: Potassium channel toxin alpha-KTx 9.9 (58 aa).

The first 21 residues, 1–21 (KKTSRLFTLVLIVLAMNVMMA), serve as a signal peptide directing secretion. Residues 22 to 30 (IISDPVVEA) constitute a propeptide that is removed on maturation. 3 disulfides stabilise this stretch: cysteine 33/cysteine 49, cysteine 36/cysteine 54, and cysteine 40/cysteine 56.

Belongs to the short scorpion toxin superfamily. Potassium channel inhibitor family. Alpha-KTx 09 subfamily. Expressed by the venom gland.

It is found in the secreted. Functionally, potassium channel inhibitor. The chain is Potassium channel toxin alpha-KTx 9.9 from Buthus israelis (Israeli scorpion).